The chain runs to 330 residues: Tryptophan--tRNA ligase (330 aa).

ATP contacts are provided by residues 10–12 and 18–19; these read QTT and GN. The short motif at 11–19 is the 'HIGH' region element; it reads TTGALHLGN. L-tryptophan is bound at residue Asp134. ATP contacts are provided by residues 146 to 148, Ile186, and 195 to 199; these read GED and KMSKS. The short motif at 195 to 199 is the 'KMSKS' region element; sequence KMSKS.

This sequence belongs to the class-I aminoacyl-tRNA synthetase family. In terms of assembly, homodimer.

It localises to the cytoplasm. The catalysed reaction is tRNA(Trp) + L-tryptophan + ATP = L-tryptophyl-tRNA(Trp) + AMP + diphosphate + H(+). Functionally, catalyzes the attachment of tryptophan to tRNA(Trp). The protein is Tryptophan--tRNA ligase of Rickettsia typhi (strain ATCC VR-144 / Wilmington).